We begin with the raw amino-acid sequence, 205 residues long: Variable small protein 11 (205 aa).

Residues 1 to 18 (MRKRISAIIMTLFMVFMS) form the signal peptide. C19 carries N-palmitoyl cysteine lipidation. A lipid anchor (S-diacylglycerol cysteine) is attached at C19.

This sequence belongs to the variable small protein (Vsp) family.

It localises to the cell outer membrane. In terms of biological role, the Vlp and Vsp proteins are antigenically distinct proteins, only one vlp or vsp gene is transcriptionally active at any one time. Switching between these genes is a mechanism of host immune response evasion. This is Variable small protein 11 from Borrelia hermsii.